Reading from the N-terminus, the 189-residue chain is GTP cyclohydrolase 1 (189 aa).

The Zn(2+) site is built by Cys78, His81, and Cys150.

The protein belongs to the GTP cyclohydrolase I family. In terms of assembly, homomer.

It catalyses the reaction GTP + H2O = 7,8-dihydroneopterin 3'-triphosphate + formate + H(+). The protein operates within cofactor biosynthesis; 7,8-dihydroneopterin triphosphate biosynthesis; 7,8-dihydroneopterin triphosphate from GTP: step 1/1. The sequence is that of GTP cyclohydrolase 1 from Listeria monocytogenes serotype 4b (strain CLIP80459).